A 172-amino-acid chain; its full sequence is uncharacterized protein (172 aa).

Residues 12–172 enclose the N-acetyltransferase domain; it reads IRLRCMEDRD…IAVYERKSYN (161 aa).

This is an uncharacterized protein from Bacillus subtilis (strain 168).